The chain runs to 247 residues: 5'-nucleotidase SurE (247 aa).

A divalent metal cation-binding residues include Asp-8, Asp-9, Ser-39, and Asn-91.

Belongs to the SurE nucleotidase family. The cofactor is a divalent metal cation.

It is found in the cytoplasm. The catalysed reaction is a ribonucleoside 5'-phosphate + H2O = a ribonucleoside + phosphate. Nucleotidase that shows phosphatase activity on nucleoside 5'-monophosphates. This Pelobacter propionicus (strain DSM 2379 / NBRC 103807 / OttBd1) protein is 5'-nucleotidase SurE.